A 145-amino-acid polypeptide reads, in one-letter code: Ribosome-binding factor A (145 aa).

The segment covering 122–132 has biased composition (basic and acidic residues); sequence KVQRDLESAPR. Residues 122-145 are disordered; sequence KVQRDLESAPREDDEGEPASSSRD.

Belongs to the RbfA family. As to quaternary structure, monomer. Binds 30S ribosomal subunits, but not 50S ribosomal subunits or 70S ribosomes.

Its subcellular location is the cytoplasm. One of several proteins that assist in the late maturation steps of the functional core of the 30S ribosomal subunit. Associates with free 30S ribosomal subunits (but not with 30S subunits that are part of 70S ribosomes or polysomes). Required for efficient processing of 16S rRNA. May interact with the 5'-terminal helix region of 16S rRNA. This is Ribosome-binding factor A from Methylorubrum extorquens (strain CM4 / NCIMB 13688) (Methylobacterium extorquens).